The primary structure comprises 220 residues: MKRSASDSPLLFDLPLAPDFSQEQQLMKRGLKHIAGIDEAGRGPLAGPVVAAAVVLDQNDLPEGLDDSKRLTAARREALYEIILTKAITVSVASLSARSIDASDIHKAALEAMRRAVIGLTLKPCHALVDGRDVPPGLPCPGSALVKGDQRSVSIAAASIVAKVTRDRMMIRAGAAHPPYGLEIHAGYATQKHRAAIESEGPVPGLHRYTFAPIKGRFDC.

One can recognise an RNase H type-2 domain in the interval lysine 32 to cysteine 220. Residues aspartate 38, glutamate 39, and aspartate 130 each coordinate a divalent metal cation.

The protein belongs to the RNase HII family. Mn(2+) serves as cofactor. The cofactor is Mg(2+).

It is found in the cytoplasm. The catalysed reaction is Endonucleolytic cleavage to 5'-phosphomonoester.. In terms of biological role, endonuclease that specifically degrades the RNA of RNA-DNA hybrids. The sequence is that of Ribonuclease HII from Brucella suis (strain ATCC 23445 / NCTC 10510).